Here is a 165-residue protein sequence, read N- to C-terminus: Nascent polypeptide-associated complex subunit beta (165 aa).

Disordered regions lie at residues 1 to 34 (MDQA…TSGA) and 133 to 165 (QNMQ…KSVD). Basic residues predominate over residues 20–30 (TPRRKVKKVHK). The region spanning 33-110 (GADDKKLQAT…GEEKELTELV (78 aa)) is the NAC-A/B domain. Residues 145-158 (DDDEDDIPDLVEGE) show a composition bias toward acidic residues.

It belongs to the NAC-beta family. Part of the nascent polypeptide-associated complex (NAC), consisting of egd2 and egd1. NAC associates with ribosomes via egd1.

The protein localises to the cytoplasm. It is found in the nucleus. In terms of biological role, component of the nascent polypeptide-associated complex (NAC), a dynamic component of the ribosomal exit tunnel, protecting the emerging polypeptides from interaction with other cytoplasmic proteins to ensure appropriate nascent protein targeting. The NAC complex also promotes mitochondrial protein import by enhancing productive ribosome interactions with the outer mitochondrial membrane and blocks the inappropriate interaction of ribosomes translating non-secretory nascent polypeptides with translocation sites in the membrane of the endoplasmic reticulum. EGD1 may act as a transcription factor that exert a negative effect on the expression of several genes that are transcribed by RNA polymerase II. In Emericella nidulans (strain FGSC A4 / ATCC 38163 / CBS 112.46 / NRRL 194 / M139) (Aspergillus nidulans), this protein is Nascent polypeptide-associated complex subunit beta (egd1).